We begin with the raw amino-acid sequence, 880 residues long: GATOR2 complex protein MIOS-A (880 aa).

WD repeat units lie at residues 60-102, 113-157, 185-224, 226-264, 268-309, and 399-441; these read SDTP…NSKC, KHAR…TPEV, GQND…QKMF, NTKA…KPVL, EQPK…TPIG, and RLRA…KQYA. The segment at 740–786 adopts a C4-type zinc-finger fold; it reads VSCNFCGKSISYSCSSVPHQGRGFSQYGVSGSPTKSKFTSCPGCRKP. Residues Cys742, Cys745, Cys780, Cys783, Cys793, Cys832, Cys835, His837, His840, His843, Cys854, Cys859, and Cys863 each contribute to the Zn(2+) site. The segment at 787–868 adopts an RING-type; atypical zinc-finger fold; that stretch reads LPRCALCLIN…CSCKCMQLDT (82 aa).

It belongs to the WD repeat mio family. Component of the GATOR2 subcomplex, composed of MIOS, SEC13, SEH1L, WDR24 and WDR59. The GATOR2 complex interacts with CASTOR1 and CASTOR2; the interaction is negatively regulated by arginine. The GATOR2 complex interacts with SESN1, SESN2 and SESN3; the interaction is negatively regulated by amino acids. Interacts with SAR1; the interaction is direct, disrupted by leucine and mediates the interaction of SAR1 with the GATOR2 complex to negatively regulate the TORC1 signaling upon leucine deprivation.

Its subcellular location is the lysosome membrane. Its activity is regulated as follows. The GATOR2 complex is negatively regulated by the upstream amino acid sensors CASTOR1 and SESN2, which sequester the GATOR2 complex in absence of amino acids. In the presence of abundant amino acids, GATOR2 is released from CASTOR1 and SESN2 and activated. Its function is as follows. As a component of the GATOR2 complex, functions as an activator of the amino acid-sensing branch of the mTORC1 signaling pathway. The GATOR2 complex indirectly activates mTORC1 through the inhibition of the GATOR1 subcomplex. GATOR2 probably acts as an E3 ubiquitin-protein ligase toward GATOR1. In the presence of abundant amino acids, the GATOR2 complex mediates ubiquitination of the NPRL2 core component of the GATOR1 complex, leading to GATOR1 inactivation. In the absence of amino acids, GATOR2 is inhibited, activating the GATOR1 complex. Within the GATOR2 complex, MIOS is required to prevent autoubiquitination of WDR24, the catalytic subunit of the complex. This Xenopus laevis (African clawed frog) protein is GATOR2 complex protein MIOS-A.